The following is a 621-amino-acid chain: 1-deoxy-D-xylulose-5-phosphate synthase (621 aa).

Residues His-80 and 121 to 123 (GHS) each bind thiamine diphosphate. Asp-152 contributes to the Mg(2+) binding site. Thiamine diphosphate-binding positions include 153-154 (GA), Asn-181, Tyr-288, and Glu-370. Asn-181 contacts Mg(2+).

This sequence belongs to the transketolase family. DXPS subfamily. As to quaternary structure, homodimer. It depends on Mg(2+) as a cofactor. Thiamine diphosphate serves as cofactor.

It catalyses the reaction D-glyceraldehyde 3-phosphate + pyruvate + H(+) = 1-deoxy-D-xylulose 5-phosphate + CO2. The protein operates within metabolic intermediate biosynthesis; 1-deoxy-D-xylulose 5-phosphate biosynthesis; 1-deoxy-D-xylulose 5-phosphate from D-glyceraldehyde 3-phosphate and pyruvate: step 1/1. In terms of biological role, catalyzes the acyloin condensation reaction between C atoms 2 and 3 of pyruvate and glyceraldehyde 3-phosphate to yield 1-deoxy-D-xylulose-5-phosphate (DXP). In Pseudoalteromonas atlantica (strain T6c / ATCC BAA-1087), this protein is 1-deoxy-D-xylulose-5-phosphate synthase.